Here is a 930-residue protein sequence, read N- to C-terminus: Beta-mannosidase A (930 aa).

A signal peptide spans 1-21 (MHVKAETVLALLTPGLPSVVG). N-linked (GlcNAc...) asparagine glycosylation is found at N62, N246, N281, N315, and N346. Catalysis depends on E478, which acts as the Proton donor. 11 N-linked (GlcNAc...) asparagine glycosylation sites follow: N536, N607, N630, N657, N737, N760, N782, N789, N797, N823, and N909.

It belongs to the glycosyl hydrolase 2 family. Beta-mannosidase A subfamily. As to quaternary structure, homodimer.

Its subcellular location is the secreted. It carries out the reaction Hydrolysis of terminal, non-reducing beta-D-mannose residues in beta-D-mannosides.. Its pathway is glycan metabolism; N-glycan degradation. Exoglycosidase that cleaves the single beta-linked mannose residue from the non-reducing end of beta-mannosidic oligosaccharides of various complexity and length. Involved in the degradation of polymeric mannan and galactomannan. This chain is Beta-mannosidase A (mndA), found in Neosartorya fischeri (strain ATCC 1020 / DSM 3700 / CBS 544.65 / FGSC A1164 / JCM 1740 / NRRL 181 / WB 181) (Aspergillus fischerianus).